Consider the following 578-residue polypeptide: Phenylalanine--tRNA ligase beta subunit (578 aa).

Positions 292 to 370 (FDTDEKSVSH…RAYGFDNLEP (79 aa)) constitute a B5 domain. 4 residues coordinate Mg(2+): aspartate 348, aspartate 354, aspartate 357, and aspartate 358.

Belongs to the phenylalanyl-tRNA synthetase beta subunit family. Type 2 subfamily. In terms of assembly, tetramer of two alpha and two beta subunits. The cofactor is Mg(2+).

The protein resides in the cytoplasm. The enzyme catalyses tRNA(Phe) + L-phenylalanine + ATP = L-phenylalanyl-tRNA(Phe) + AMP + diphosphate + H(+). This chain is Phenylalanine--tRNA ligase beta subunit, found in Halorubrum lacusprofundi (strain ATCC 49239 / DSM 5036 / JCM 8891 / ACAM 34).